A 347-amino-acid chain; its full sequence is Protein RecA (347 aa).

68–75 (GPESSGKT) is a binding site for ATP.

It belongs to the RecA family.

Its subcellular location is the cytoplasm. Functionally, can catalyze the hydrolysis of ATP in the presence of single-stranded DNA, the ATP-dependent uptake of single-stranded DNA by duplex DNA, and the ATP-dependent hybridization of homologous single-stranded DNAs. It interacts with LexA causing its activation and leading to its autocatalytic cleavage. This Rhodococcus jostii (strain RHA1) protein is Protein RecA.